Consider the following 371-residue polypeptide: MPHHYILTLFGLLPVATNISTWWNFGSMLLTCLVLQVLTGFFLAVHYTANINLAFSSIVHITRDVPYGWMMQNLHAIGASMFFICIYIHIARGLYYGSYLNKETWMSGITLLITLMATALFGYVLPWGQMSFWAATVITNLLTAVPYLGTSLTTWLWGGFAINDPTLTRFFALHFILPFAIISLSSLHIILLHEEGSSNPLGTNPDIDKIPFHPYHSHKDLLLLTLMMMFLFIIVSFFPDIFNDPDNFSKANPLVTPQHIKPEWYFLFAYGILRSIPNKLGGALALVASIMILFTTPFTHTANLRPMTFRPLSQLMFWTLVSTFITITWAATKPVEPPFIAISQVTSMLYFTFFLSIPILGWMENKMMNTP.

The next 4 helical transmembrane spans lie at 25–45 (FGSMLLTCLVLQVLTGFFLAV), 69–90 (WMMQNLHAIGASMFFICIYIHI), 105–125 (WMSGITLLITLMATALFGYVL), and 170–190 (FFALHFILPFAIISLSSLHII). Heme b is bound by residues His75 and His89. Residues His174 and His188 each coordinate heme b. His193 provides a ligand contact to a ubiquinone. A run of 4 helical transmembrane segments spans residues 218–238 (HKDLLLLTLMMMFLFIIVSFF), 280–300 (LGGALALVASIMILFTTPFTH), 312–332 (LSQLMFWTLVSTFITITWAAT), and 339–358 (FIAISQVTSMLYFTFFLSIP).

Belongs to the cytochrome b family. As to quaternary structure, the cytochrome bc1 complex contains 3 respiratory subunits (MT-CYB, CYC1 and UQCRFS1), 2 core proteins (UQCRC1 and UQCRC2) and probably 6 low-molecular weight proteins. It depends on heme b as a cofactor.

It is found in the mitochondrion inner membrane. Functionally, component of the ubiquinol-cytochrome c reductase complex (complex III or cytochrome b-c1 complex) that is part of the mitochondrial respiratory chain. The b-c1 complex mediates electron transfer from ubiquinol to cytochrome c. Contributes to the generation of a proton gradient across the mitochondrial membrane that is then used for ATP synthesis. The sequence is that of Cytochrome b (MT-CYB) from Liasis olivaceus (Olive python).